A 330-amino-acid polypeptide reads, in one-letter code: Fructose-1,6-bisphosphatase class 1 (330 aa).

Mg(2+) is bound by residues E84, D103, L105, and D106. Residues 106 to 109, N196, and K262 each bind substrate; that span reads DGSS. E268 lines the Mg(2+) pocket.

Belongs to the FBPase class 1 family. Homotetramer. Requires Mg(2+) as cofactor.

It is found in the cytoplasm. The catalysed reaction is beta-D-fructose 1,6-bisphosphate + H2O = beta-D-fructose 6-phosphate + phosphate. It functions in the pathway carbohydrate biosynthesis; gluconeogenesis. In Shewanella sp. (strain W3-18-1), this protein is Fructose-1,6-bisphosphatase class 1.